The chain runs to 431 residues: Pachytene checkpoint protein 2 homolog (431 aa).

An N-acetylmethionine modification is found at Met-1. An ATP-binding site is contributed by Gly-179–Thr-186.

It belongs to the AAA ATPase family. PCH2 subfamily. Specifically interacts with the ligand binding domain of the thyroid receptor (TR). This interaction does not require the presence of thyroid hormone for its interaction. Interacts with proteasome subunit PSMA8; to participate in meiosis progression during spermatogenesis.

Its function is as follows. Plays a key role in chromosome recombination and chromosome structure development during meiosis. Required at early steps in meiotic recombination that leads to non-crossovers pathways. Also needed for efficient completion of homologous synapsis by influencing crossover distribution along the chromosomes affecting both crossovers and non-crossovers pathways. Also required for development of higher-order chromosome structures and is needed for synaptonemal-complex formation. In males, required for efficient synapsis of the sex chromosomes and for sex body formation. Promotes early steps of the DNA double-strand breaks (DSBs) repair process upstream of the assembly of RAD51 complexes. Required for depletion of HORMAD1 and HORMAD2 from synapsed chromosomes. Plays a role in mitotic spindle assembly checkpoint (SAC) activation. In Sus scrofa (Pig), this protein is Pachytene checkpoint protein 2 homolog (TRIP13).